The sequence spans 474 residues: L-arabinose isomerase (474 aa).

E306, E331, H348, and H447 together coordinate Mn(2+).

It belongs to the arabinose isomerase family. Mn(2+) is required as a cofactor.

It carries out the reaction beta-L-arabinopyranose = L-ribulose. Its pathway is carbohydrate degradation; L-arabinose degradation via L-ribulose; D-xylulose 5-phosphate from L-arabinose (bacterial route): step 1/3. Catalyzes the conversion of L-arabinose to L-ribulose. The chain is L-arabinose isomerase from Leuconostoc mesenteroides subsp. mesenteroides (strain ATCC 8293 / DSM 20343 / BCRC 11652 / CCM 1803 / JCM 6124 / NCDO 523 / NBRC 100496 / NCIMB 8023 / NCTC 12954 / NRRL B-1118 / 37Y).